A 200-amino-acid chain; its full sequence is Dephospho-CoA kinase (200 aa).

The 198-residue stretch at 3–200 (RIGLTGGIGS…LIAEILTRIK (198 aa)) folds into the DPCK domain. 11-16 (GSGKST) contributes to the ATP binding site.

The protein belongs to the CoaE family.

The protein localises to the cytoplasm. The enzyme catalyses 3'-dephospho-CoA + ATP = ADP + CoA + H(+). It functions in the pathway cofactor biosynthesis; coenzyme A biosynthesis; CoA from (R)-pantothenate: step 5/5. Catalyzes the phosphorylation of the 3'-hydroxyl group of dephosphocoenzyme A to form coenzyme A. The protein is Dephospho-CoA kinase of Corynebacterium efficiens (strain DSM 44549 / YS-314 / AJ 12310 / JCM 11189 / NBRC 100395).